The primary structure comprises 956 residues: Ubiquitin carboxyl-terminal hydrolase CYLD (956 aa).

An interaction with TRIP region spans residues 106–593 (CEERFSLFKN…LEIMIGKKKG (488 aa)). 2 CAP-Gly domains span residues 153-198 (LAER…VFVA) and 253-286 (DVLPGKESLGYFVGVDMDNPIGNWDGRFDGVQLC). The interval 309-353 (SVTQERRPPKLAFMSRGVGDKGSSSHNKPKATGSTSDPGNRNRSE) is disordered. Over residues 330–349 (GSSSHNKPKATGSTSDPGNR) the composition is skewed to polar residues. Phosphoserine is present on S387. Residues 392 to 411 (STDFDRSSPPLQPPPVNSLS) form a disordered region. The segment at 394-469 (DFDRSSPPLQ…LAMPPGNSHG (76 aa)) is interaction with TRAF2. A phosphoserine mark is found at S418 and S422. The segment at 470 to 684 (LEVGSLAEVK…FTSEEKDPEE (215 aa)) is interaction with IKBKG/NEMO. Residues 492 to 535 (GQPPGLNEVLAGLELEDECAGCTDGTFRGTRYFTCALKKALFVK) form the CAP-Gly 3 domain. Residues 592-950 (KGIQGHYNSC…DAYMCMYQSP (359 aa)) enclose the USP domain. C601 serves as the catalytic Nucleophile. Residues 781–833 (LEDTPRQCRICGGLAMYECRECYDDPDISAGKIKQFCKTCNTQVHLHPKRLNH) form a B-box region. 8 residues coordinate Zn(2+): C788, C791, C799, C802, C817, C820, H825, and H833. Catalysis depends on H871, which acts as the Proton acceptor.

This sequence belongs to the peptidase C19 family. As to quaternary structure, interacts (via CAP-Gly domain) with IKBKG/NEMO (via proline-rich C-terminal region). Interacts with TRAF2 and TRIP. Interacts with PLK1, DVL1, DVL3, MAVS, TBK1, IKKE and RIGI. Interacts (via CAP-Gly domain) with microtubules. Interacts with HDAC6 and BCL3. Interacts with MAP3K7. Identified in a complex with TRAF6 and SQSTM1. Interacts with OPTN and SQSTM1. Interacts with CEP350. Interacts with RNF31; the interaction is indirect and is mediated via SPATA2. Interacts with SPATA2 (via the PUB domain); the interaction is direct and recruits CYLD to the LUBAC complex, thereby regulating TNF-alpha-induced necroptosis. Post-translationally, phosphorylated on several serine residues by IKKA and/or IKKB in response to immune stimuli. Phosphorylation requires IKBKG. Phosphorylation abolishes TRAF2 deubiquitination, interferes with the activation of Jun kinases, and strongly reduces CD40-dependent gene activation by NF-kappa-B. In terms of processing, ubiquitinated. Polyubiquitinated in hepatocytes treated with palmitic acid. Ubiquitination is mediated by E3 ligase TRIM47 and leads to proteasomal degradation.

The protein localises to the cytoplasm. It is found in the perinuclear region. It localises to the cytoskeleton. Its subcellular location is the cell membrane. The protein resides in the microtubule organizing center. The protein localises to the centrosome. It is found in the spindle. It localises to the cilium basal body. The enzyme catalyses Thiol-dependent hydrolysis of ester, thioester, amide, peptide and isopeptide bonds formed by the C-terminal Gly of ubiquitin (a 76-residue protein attached to proteins as an intracellular targeting signal).. In terms of biological role, deubiquitinase that specifically cleaves 'Lys-63'- and linear 'Met-1'-linked polyubiquitin chains and is involved in NF-kappa-B activation and TNF-alpha-induced necroptosis. Negatively regulates NF-kappa-B activation by deubiquitinating upstream signaling factors. Contributes to the regulation of cell survival, proliferation and differentiation via its effects on NF-kappa-B activation. Negative regulator of Wnt signaling. Inhibits HDAC6 and thereby promotes acetylation of alpha-tubulin and stabilization of microtubules. Plays a role in the regulation of microtubule dynamics, and thereby contributes to the regulation of cell proliferation, cell polarization, cell migration, and angiogenesis. Required for normal cell cycle progress and normal cytokinesis. Inhibits nuclear translocation of NF-kappa-B. Plays a role in the regulation of inflammation and the innate immune response, via its effects on NF-kappa-B activation. Dispensable for the maturation of intrathymic natural killer cells, but required for the continued survival of immature natural killer cells. Negatively regulates TNFRSF11A signaling and osteoclastogenesis. Involved in the regulation of ciliogenesis, allowing ciliary basal bodies to migrate and dock to the plasma membrane; this process does not depend on NF-kappa-B activation. Ability to remove linear ('Met-1'-linked) polyubiquitin chains regulates innate immunity and TNF-alpha-induced necroptosis: recruited to the LUBAC complex via interaction with SPATA2 and restricts linear polyubiquitin formation on target proteins. Regulates innate immunity by restricting linear polyubiquitin formation on RIPK2 in response to NOD2 stimulation. Involved in TNF-alpha-induced necroptosis by removing linear ('Met-1'-linked) polyubiquitin chains from RIPK1, thereby regulating the kinase activity of RIPK1. Negatively regulates intestinal inflammation by removing 'Lys-63' linked polyubiquitin chain of NLRP6, thereby reducing the interaction between NLRP6 and PYCARD/ASC and formation of the NLRP6 inflammasome. Does not catalyze deubiquitination of heterotypic 'Lys-63'-/'Lys-48'-linked branched ubiquitin chains. Removes 'Lys-63' linked polyubiquitin chain of MAP3K7, which inhibits phosphorylation and blocks downstream activation of the JNK-p38 kinase cascades. Also removes 'Lys-63'-linked polyubiquitin chains of MAP3K1 and MA3P3K3, which inhibit their interaction with MAP2K1 and MAP2K2. This is Ubiquitin carboxyl-terminal hydrolase CYLD (CYLD) from Pongo abelii (Sumatran orangutan).